The sequence spans 201 residues: Probable molybdenum cofactor guanylyltransferase (201 aa).

GTP is bound by residues 16-18 (LAG), lysine 28, aspartate 75, and aspartate 107. Aspartate 107 provides a ligand contact to Mg(2+).

It belongs to the MobA family. It depends on Mg(2+) as a cofactor.

Its subcellular location is the cytoplasm. It catalyses the reaction Mo-molybdopterin + GTP + H(+) = Mo-molybdopterin guanine dinucleotide + diphosphate. Its function is as follows. Transfers a GMP moiety from GTP to Mo-molybdopterin (Mo-MPT) cofactor (Moco or molybdenum cofactor) to form Mo-molybdopterin guanine dinucleotide (Mo-MGD) cofactor. This chain is Probable molybdenum cofactor guanylyltransferase, found in Mycobacterium bovis (strain ATCC BAA-935 / AF2122/97).